Consider the following 103-residue polypeptide: Astacin-like peptidase p16 (103 aa).

Residues 1 to 103 enclose the Peptidase M12A domain; it reads NAIPGQHYRW…DAFSRDGSPM (103 aa).

It depends on Zn(2+) as a cofactor.

Functionally, active against casein. Has a role as a digestive enzyme. This is Astacin-like peptidase p16 from Argiope aurantia (Black-and-yellow garden spider).